A 158-amino-acid chain; its full sequence is Non-specific lipid transfer protein GPI-anchored 29 (158 aa).

The N-terminal stretch at 1–24 is a signal peptide; that stretch reads MAYFSTATSLLLLVLSVSSPYVHG. 4 cysteine pairs are disulfide-bonded: C28/C71, C38/C55, C56/C95, and C69/C105. Residue N84 is glycosylated (N-linked (GlcNAc...) asparagine). S134 carries GPI-anchor amidated serine lipidation. The propeptide at 135–158 is removed in mature form; sequence KGNSLIPISGFSFVIVTALAMFRI.

The protein belongs to the plant LTP family. Confined to the ovaries of the inflorescence.

It localises to the secreted. It is found in the cell membrane. Probable lipid transfer protein. This is Non-specific lipid transfer protein GPI-anchored 29 from Arabidopsis thaliana (Mouse-ear cress).